Consider the following 212-residue polypeptide: 2-phospho-L-lactate guanylyltransferase (212 aa).

It belongs to the CofC family. Homodimer.

It catalyses the reaction (2S)-2-phospholactate + GTP + H(+) = (2S)-lactyl-2-diphospho-5'-guanosine + diphosphate. Its pathway is cofactor biosynthesis; coenzyme F420 biosynthesis. Guanylyltransferase that catalyzes the activation of (2S)-2-phospholactate (2-PL) as (2S)-lactyl-2-diphospho-5'-guanosine, via the condensation of 2-PL with GTP. It is involved in the biosynthesis of coenzyme F420, a hydride carrier cofactor. The protein is 2-phospho-L-lactate guanylyltransferase of Methanocorpusculum labreanum (strain ATCC 43576 / DSM 4855 / Z).